A 465-amino-acid polypeptide reads, in one-letter code: A-type ATP synthase subunit B (465 aa).

This sequence belongs to the ATPase alpha/beta chains family. Has multiple subunits with at least A(3), B(3), C, D, E, F, H, I and proteolipid K(x).

It is found in the cell membrane. Functionally, component of the A-type ATP synthase that produces ATP from ADP in the presence of a proton gradient across the membrane. The B chain is a regulatory subunit. The polypeptide is A-type ATP synthase subunit B (Pyrococcus horikoshii (strain ATCC 700860 / DSM 12428 / JCM 9974 / NBRC 100139 / OT-3)).